The primary structure comprises 298 residues: Acetylglutamate kinase (298 aa).

Residues 69 to 70 (GG), R91, and N196 each bind substrate.

Belongs to the acetylglutamate kinase family. ArgB subfamily.

Its subcellular location is the cytoplasm. The catalysed reaction is N-acetyl-L-glutamate + ATP = N-acetyl-L-glutamyl 5-phosphate + ADP. Its pathway is amino-acid biosynthesis; L-arginine biosynthesis; N(2)-acetyl-L-ornithine from L-glutamate: step 2/4. Catalyzes the ATP-dependent phosphorylation of N-acetyl-L-glutamate. This is Acetylglutamate kinase from Bradyrhizobium sp. (strain ORS 278).